Here is a 210-residue protein sequence, read N- to C-terminus: Oxygen-insensitive NADPH nitroreductase (210 aa).

NADP(+) is bound at residue 150–155; sequence GVSLMG.

Belongs to the nitroreductase family.

Reduction of a variety of nitroaromatic compounds using NADPH as source of reducing equivalents; two electrons are transferred. Capable of reducing metronidazole; inactive RdxA renders the bacterium resistant to this compound. The reduction of metronidazole generates hydroxylamine, a potent mutagen and bactericide. This Helicobacter pylori (strain ATCC 700392 / 26695) (Campylobacter pylori) protein is Oxygen-insensitive NADPH nitroreductase (rdxA).